Reading from the N-terminus, the 317-residue chain is Membrane-associated protein VIPP1, chloroplastic (317 aa).

Residues 92-246 (EMNDDLTKMR…SQAEALGQLA (155 aa)) are a coiled coil. Positions 265 to 317 (DLAQMKKEISGSSSKGELPPGRTAVSNSGAARPFRDIEIENELNELRKKANEY) are disordered. The span at 297-317 (PFRDIEIENELNELRKKANEY) shows a compositional bias: basic and acidic residues.

Belongs to the PspA/Vipp/IM30 family. In terms of assembly, homomultimer. Complex formation involves interaction via the central alpha-helical domain (71-286). As to quaternary structure, (Microbial infection) Interacts with the rice tungro bacilliform virus (RTBV) capsid protein.

It localises to the plastid. The protein localises to the chloroplast inner membrane. The protein resides in the chloroplast thylakoid membrane. Its function is as follows. Required for plastid vesicle formation and thylakoid membrane biogenesis, but not for functional assembly of thylakoid protein complexes. The protein is Membrane-associated protein VIPP1, chloroplastic of Oryza sativa subsp. japonica (Rice).